Consider the following 384-residue polypeptide: uncharacterized protein (384 aa).

It to S.pombe SpAC2E11.17.

This is an uncharacterized protein from Schizosaccharomyces pombe (strain 972 / ATCC 24843) (Fission yeast).